A 343-amino-acid polypeptide reads, in one-letter code: MNFLRKTLFPFAILYGFITSIRNFLFDCGILKSHAFPIPVIAVGNLSVGGTGKTPQIEYLIRLLSNKYQIATLSRGYKRKSEGFILANPTSNAEILGDEPFQFYKKFPNIQVAVAANRKNGIERLLSLPNKPEIILLDDAFQHRKVKAGFYILLTAYNDLFINDFMLPTGNLRESRSGAKRANMIIVTKCPKDISELAQNKIKEALINYNNKKAEVFFTFIDYDDKIYSANKALNVNEVKTASKLLLAGIAKPESFFAHLQSQNDECLVYPDHHHFLEKNITDIKEKAKNKIIITTEKDFVRLSEKLNSDNLFYLPIKSLFVNNEKKFDKKIINYVESSTTNG.

Residue 47–54 (SVGGTGKT) coordinates ATP.

This sequence belongs to the LpxK family.

The enzyme catalyses a lipid A disaccharide + ATP = a lipid IVA + ADP + H(+). Its pathway is glycolipid biosynthesis; lipid IV(A) biosynthesis; lipid IV(A) from (3R)-3-hydroxytetradecanoyl-[acyl-carrier-protein] and UDP-N-acetyl-alpha-D-glucosamine: step 6/6. Its function is as follows. Transfers the gamma-phosphate of ATP to the 4'-position of a tetraacyldisaccharide 1-phosphate intermediate (termed DS-1-P) to form tetraacyldisaccharide 1,4'-bis-phosphate (lipid IVA). This chain is Tetraacyldisaccharide 4'-kinase, found in Flavobacterium psychrophilum (strain ATCC 49511 / DSM 21280 / CIP 103535 / JIP02/86).